Here is a 190-residue protein sequence, read N- to C-terminus: NADH dehydrogenase [ubiquinone] iron-sulfur protein 3 (190 aa).

Belongs to the complex I 30 kDa subunit family. Complex I is composed of at least 49 different subunits. This is a component of the iron-sulfur (IP) fragment of the enzyme.

Its subcellular location is the mitochondrion inner membrane. It carries out the reaction a ubiquinone + NADH + 5 H(+)(in) = a ubiquinol + NAD(+) + 4 H(+)(out). Functionally, core subunit of the mitochondrial membrane respiratory chain NADH dehydrogenase (Complex I) that is believed to belong to the minimal assembly required for catalysis. Complex I functions in the transfer of electrons from NADH to the respiratory chain. The immediate electron acceptor for the enzyme is believed to be ubiquinone. The chain is NADH dehydrogenase [ubiquinone] iron-sulfur protein 3 (NAD9) from Arabidopsis thaliana (Mouse-ear cress).